Here is a 348-residue protein sequence, read N- to C-terminus: Anthranilate phosphoribosyltransferase (348 aa).

5-phospho-alpha-D-ribose 1-diphosphate contacts are provided by residues G89, 92–93, T97, 99–102, 117–125, and S129; these read GD, NIST, and KHGNRSVSS. Position 89 (G89) interacts with anthranilate. S101 lines the Mg(2+) pocket. N120 lines the anthranilate pocket. R175 contacts anthranilate. Positions 233 and 234 each coordinate Mg(2+).

It belongs to the anthranilate phosphoribosyltransferase family. Homodimer. Mg(2+) is required as a cofactor.

The catalysed reaction is N-(5-phospho-beta-D-ribosyl)anthranilate + diphosphate = 5-phospho-alpha-D-ribose 1-diphosphate + anthranilate. Its pathway is amino-acid biosynthesis; L-tryptophan biosynthesis; L-tryptophan from chorismate: step 2/5. Functionally, catalyzes the transfer of the phosphoribosyl group of 5-phosphorylribose-1-pyrophosphate (PRPP) to anthranilate to yield N-(5'-phosphoribosyl)-anthranilate (PRA). The polypeptide is Anthranilate phosphoribosyltransferase (Shewanella putrefaciens (strain CN-32 / ATCC BAA-453)).